We begin with the raw amino-acid sequence, 302 residues long: 4-hydroxy-tetrahydrodipicolinate synthase (302 aa).

Pyruvate is bound at residue threonine 46. Tyrosine 134 acts as the Proton donor/acceptor in catalysis. Residue lysine 162 is the Schiff-base intermediate with substrate of the active site. Valine 204 is a binding site for pyruvate.

It belongs to the DapA family. In terms of assembly, homotetramer; dimer of dimers.

It localises to the cytoplasm. It carries out the reaction L-aspartate 4-semialdehyde + pyruvate = (2S,4S)-4-hydroxy-2,3,4,5-tetrahydrodipicolinate + H2O + H(+). It functions in the pathway amino-acid biosynthesis; L-lysine biosynthesis via DAP pathway; (S)-tetrahydrodipicolinate from L-aspartate: step 3/4. Catalyzes the condensation of (S)-aspartate-beta-semialdehyde [(S)-ASA] and pyruvate to 4-hydroxy-tetrahydrodipicolinate (HTPA). The protein is 4-hydroxy-tetrahydrodipicolinate synthase of Xanthomonas campestris pv. campestris (strain ATCC 33913 / DSM 3586 / NCPPB 528 / LMG 568 / P 25).